The sequence spans 205 residues: MAINYPAGTRRRTAQAKNTMRTGKTTKKALTFGKRGMGLEDEINLANDYYLANHLAVIHKKPTPITIVKVDYPARSAAKITEAYFKQASTTDYNGVYQGRYIDFDAKETKNKTSFPLKNFHEHQIVHLANVLSQNGVGFVIIKFTSLDESYIYPAQALIRQWEKLRGKQSIAYQDIIAEGYRVPESLNPSLDYLKAVDQYFENLN.

The tract at residues 1 to 22 (MAINYPAGTRRRTAQAKNTMRT) is disordered. Mg(2+) contacts are provided by Thr-90, Asp-92, Asp-105, and Gln-124.

Belongs to the RecU family. Mg(2+) is required as a cofactor.

The protein resides in the cytoplasm. It carries out the reaction Endonucleolytic cleavage at a junction such as a reciprocal single-stranded crossover between two homologous DNA duplexes (Holliday junction).. Functionally, endonuclease that resolves Holliday junction intermediates in genetic recombination. Cleaves mobile four-strand junctions by introducing symmetrical nicks in paired strands. Promotes annealing of linear ssDNA with homologous dsDNA. Required for DNA repair, homologous recombination and chromosome segregation. This Leuconostoc citreum (strain KM20) protein is Holliday junction resolvase RecU.